A 317-amino-acid polypeptide reads, in one-letter code: Signal recognition particle receptor FtsY (317 aa).

Residues 117 to 124, 199 to 203, and 263 to 266 each bind GTP; these read GVNGVGKT, DTAGR, and TKLD.

The protein belongs to the GTP-binding SRP family. FtsY subfamily. In terms of assembly, part of the signal recognition particle protein translocation system, which is composed of SRP and FtsY.

It is found in the cell membrane. Its subcellular location is the cytoplasm. It catalyses the reaction GTP + H2O = GDP + phosphate + H(+). Its function is as follows. Involved in targeting and insertion of nascent membrane proteins into the cytoplasmic membrane. Acts as a receptor for the complex formed by the signal recognition particle (SRP) and the ribosome-nascent chain (RNC). In Deinococcus radiodurans (strain ATCC 13939 / DSM 20539 / JCM 16871 / CCUG 27074 / LMG 4051 / NBRC 15346 / NCIMB 9279 / VKM B-1422 / R1), this protein is Signal recognition particle receptor FtsY.